We begin with the raw amino-acid sequence, 1761 residues long: 6-methylsalicylic acid synthase AOL_s00215g283 (1761 aa).

In terms of domain architecture, Ketosynthase family 3 (KS3) spans 18 to 443 (QDDIAIIGMA…GTVAHAVIEQ (426 aa)). Active-site for beta-ketoacyl synthase activity residues include C190, H325, and H367. The tract at residues 554–870 (VWVFSGHGAH…ALGKLHCHGA (317 aa)) is malonyl-CoA:ACP transacylase (MAT) domain. S641 acts as the For malonyltransferase activity in catalysis. The N-terminal hotdog fold stretch occupies residues 918 to 1038 (HVLLGAKHQV…GHVANNEWSK (121 aa)). The segment at 918 to 1187 (HVLLGAKHQV…NGMRFSAVEG (270 aa)) is dehydratase (DH) domain. The PKS/mFAS DH domain maps to 918–1191 (HVLLGAKHQV…FSAVEGTPGA (274 aa)). Catalysis depends on H950, which acts as the Proton acceptor; for dehydratase activity. The tract at residues 1050-1191 (LPSVKPSFAT…FSAVEGTPGA (142 aa)) is C-terminal hotdog fold. D1113 acts as the Proton donor; for dehydratase activity in catalysis. Residues 1399–1587 (GTYLITGGLG…IVSFLWTSWN (189 aa)) are ketoreductase (KR) domain. The tract at residues 1654 to 1680 (PRKRAESSGTEAVSKGEVSEKAPVPKS) is disordered. In terms of domain architecture, Carrier spans 1686–1761 (EYLQNAISEC…HLVKWFEEKI (76 aa)). Residue S1721 is modified to O-(pantetheine 4'-phosphoryl)serine.

The enzyme catalyses 3 malonyl-CoA + acetyl-CoA + NADPH + 3 H(+) = 6-methylsalicylate + 3 CO2 + NADP(+) + 4 CoA + H2O. It functions in the pathway secondary metabolite biosynthesis; terpenoid biosynthesis. In terms of biological role, 6-methylsalicylic acid synthase; part of the gene cluster that mediates the biosynthesis of sesquiterpenyl epoxy-cyclohexenoids (SECs) such as anthrobotrisins and arthrosporols, metabolites that possess a novel hybrid carbon skeleton consisting of a polyketide-derived epoxycyclohexenol combined with a terpenoid-derived monocyclic sesquiterpenol substructure (PKS-PTS hybrid). The SEC pathway plays an important role for fungal soil colonization via decreasing fungal nematode-capturing ability. Within the pathway, the polyketide synthase (PKS) AOL_s00215g283 catalyzes the biosynthesis of 6-methylsalicylic acid (6-MSA) via condensation of 1 acetate and 3 malonate units. AOL_s00215g283 performs a series of programmed reactions including Claisen condensation, dehydration, reduction, and cyclization to yield 6-MSA. The pathway begins with the biosynthesis of 6-methylsalicylic acid (6-MSA), the first precursor of the polyketide-derived epoxycyclohexenol in arthrosporols, by the polyketide synthase (PKS) AOL_s00215g283. The 6-methylsalicylic acid decarboxylase AOL_s00215g281 then catalyzes the decarboxylation of 6-methylsalicylic acid to yield m-cresol. The cytochrome P450 monooxygenase AOL_s00215g282 further oxidizes m-cresol to yield toluquinol. With the assistance of the oxidoreductase AOL_s00215g277, the polyprenyl transferase AOL_s00215g276 catalyzes the farnesylation of toluquinol to produce farnesyl hydroquinone, the hybrid precursor for biosynthesis of SECs. Farnesyl hydroquinone undergoes epoxidation and then subsequent dehydrogenation to form farnesyl epoxy-quinone, the first and simplest SEC. The cytochrome P450 monooxygenase AOL_s00215g278 and the FAD-dependent monooxygenase AOL_s00215g279 might be involved in the oxygenation of the phenol moiety, most likely in the epoxy formation. The cytochrome P450 monooxygenases AOL_s00215g274 and AOL_s00215g280 are involved in specific regional ketone reductions at respectively C-4 and C-1 of farnesyl epoxy-quinone PubMed:33823587. The chain is 6-methylsalicylic acid synthase AOL_s00215g283 from Arthrobotrys oligospora (strain ATCC 24927 / CBS 115.81 / DSM 1491) (Nematode-trapping fungus).